The following is an 833-amino-acid chain: Major vault protein (833 aa).

8 MVP repeats span residues 10-52 (RYYY…VSVP), 54-115 (RHYC…RKLQ), 119-170 (PNTG…TVIY), 171-223 (PNTA…TMLS), 224-278 (ELKA…VSLN), 280-328 (KEYV…LVVG), 329-380 (KEEA…MALD), and 381-433 (RNEG…SIKT).

The vault ribonucleoprotein particle is a huge (400 A x 670 A) cage structure of 12.9 MDa. It consists of a dimer of half-vaults, with each half-vault comprising 39 identical major vault protein (MVP) chains, PARP4 and one or more vault RNAs (vRNAs).

The protein resides in the cytoplasm. Its subcellular location is the nucleus. Functionally, required for normal vault structure. Vaults are multi-subunit structures that may act as scaffolds for proteins involved in signal transduction. Vaults may also play a role in nucleo-cytoplasmic transport. This is Major vault protein from Leishmania braziliensis.